Reading from the N-terminus, the 406-residue chain is Terminal uridylyltransferase 7 (406 aa).

The transit peptide at M1 to H15 directs the protein to the mitochondrion. Residues S54 and S64–D65 contribute to the UTP site. Residues D65 and D67 each contribute to the Mg(2+) site. UTP-binding positions include G138–S142, K164, K168, and N181–F183.

The protein belongs to the DNA polymerase type-B-like family. Component of the mitochondrial RNA editing core complex-like (RECC-like), also known as the editosome-like complex; only a small proportion of MEAT1 associates with the complex. Interacts with RNA-editing ligase REL1. It depends on Mg(2+) as a cofactor.

It localises to the mitochondrion matrix. It carries out the reaction RNA(n) + UTP = RNA(n)-3'-uridine ribonucleotide + diphosphate. Terminal uridylyltransferase which, as part of the mitochondrial RNA editing core-like complex (RECC-like), is involved in the post-transcriptional editing of mitochondrial RNA, a process involving the addition and deletion of uridine (U) nucleotides in the pre-mRNA. Specifically, catalyzes the addition of U to single-stranded RNA with a preference for a 3'-terminal U and adds the number of Us specified by a guide RNA (gRNA) to precleaved double-stranded RNA editing substrates. Essential for insect and bloodstream developmental forms viability. In Trypanosoma brucei brucei, this protein is Terminal uridylyltransferase 7.